A 270-amino-acid polypeptide reads, in one-letter code: UPF0354 protein Bcer98_3354 (270 aa).

This sequence belongs to the UPF0354 family.

This chain is UPF0354 protein Bcer98_3354, found in Bacillus cytotoxicus (strain DSM 22905 / CIP 110041 / 391-98 / NVH 391-98).